We begin with the raw amino-acid sequence, 249 residues long: MIKILVSNDDGITAPGIAALSNALAKHYEVMTVGPDRNCSGASNSLTLTNPLRINKLDNGYISVSGTPTDCVHLAIREFYAHEPDIVVSGINAGANMGDDTLYSGTVAAAMEGRFLGLPAIAISLVGRELKHYDTAAYYACKIVAGLIDSPIASDQILNVNVPNLPLDEIKGIRVTRLGARHRAEGMVRMQDPAGREIFWLGPPGEEQDASEGTDFHAVANGYVSVTPLTVDLTAFEQVPKIKQWIEQL.

The a divalent metal cation site is built by D9, D10, S40, and N92.

The protein belongs to the SurE nucleotidase family. A divalent metal cation is required as a cofactor.

The protein localises to the cytoplasm. It catalyses the reaction a ribonucleoside 5'-phosphate + H2O = a ribonucleoside + phosphate. Nucleotidase that shows phosphatase activity on nucleoside 5'-monophosphates. This Shewanella loihica (strain ATCC BAA-1088 / PV-4) protein is 5'-nucleotidase SurE.